The primary structure comprises 106 residues: Large ribosomal subunit protein uL24 (106 aa).

This sequence belongs to the universal ribosomal protein uL24 family. As to quaternary structure, part of the 50S ribosomal subunit.

Its function is as follows. One of two assembly initiator proteins, it binds directly to the 5'-end of the 23S rRNA, where it nucleates assembly of the 50S subunit. One of the proteins that surrounds the polypeptide exit tunnel on the outside of the subunit. The protein is Large ribosomal subunit protein uL24 of Orientia tsutsugamushi (strain Boryong) (Rickettsia tsutsugamushi).